A 627-amino-acid chain; its full sequence is Neutral endopeptidase (627 aa).

The Peptidase M13 domain maps to 1–627 (MTRIQDDLFA…RAPENRLKIW (627 aa)). His475 serves as a coordination point for Zn(2+). The active site involves Glu476. The Zn(2+) site is built by His479 and Glu535. The active-site Proton donor is the Asp539.

This sequence belongs to the peptidase M13 family. As to quaternary structure, monomer. Zn(2+) serves as cofactor.

The protein resides in the cytoplasm. Endopeptidase with broad substrate specificity for several oligopeptides. The protein is Neutral endopeptidase (pepO) of Lactococcus lactis subsp. cremoris (Streptococcus cremoris).